The primary structure comprises 165 residues: MASIAVCPGSFDPVTYGHLDIIRRGAKVFDKVYVVVLNNSSKKPLFSAEERVQLLEEVTKDLHNVVVDSYQGLLVDYAKSKHASAILRGLRAVSDFEYEMQITSMNRILNEQIETFFMMTNNQYSFLSSSIVKEVAKYNGNISELVPKVVEEALRKKFAHAENHL.

Residue Ser-10 participates in substrate binding. ATP-binding positions include 10 to 11 (SF) and His-18. Residues Lys-42, Leu-74, and Arg-88 each contribute to the substrate site. Residues 89–91 (GLR), Glu-99, and 124–130 (YSFLSSS) each bind ATP.

It belongs to the bacterial CoaD family. In terms of assembly, homohexamer. Requires Mg(2+) as cofactor.

Its subcellular location is the cytoplasm. It carries out the reaction (R)-4'-phosphopantetheine + ATP + H(+) = 3'-dephospho-CoA + diphosphate. The protein operates within cofactor biosynthesis; coenzyme A biosynthesis; CoA from (R)-pantothenate: step 4/5. Functionally, reversibly transfers an adenylyl group from ATP to 4'-phosphopantetheine, yielding dephospho-CoA (dPCoA) and pyrophosphate. In Anoxybacillus flavithermus (strain DSM 21510 / WK1), this protein is Phosphopantetheine adenylyltransferase.